Here is a 741-residue protein sequence, read N- to C-terminus: NAD(P)H-quinone oxidoreductase subunit 5, chloroplastic (741 aa).

16 helical membrane passes run Trp9–Phe29, Trp40–Ile60, Ile89–Ile109, Phe125–Ile145, Ile147–Thr167, Gly185–Phe205, Asn219–Ala239, Thr258–Ala278, Leu283–Phe303, Leu327–Ile347, Ala354–Cys374, Asn396–Ser416, Trp425–Tyr445, Leu549–Phe569, Val605–Val625, and Tyr721–Leu741.

It belongs to the complex I subunit 5 family. NDH is composed of at least 16 different subunits, 5 of which are encoded in the nucleus.

It localises to the plastid. Its subcellular location is the chloroplast thylakoid membrane. The enzyme catalyses a plastoquinone + NADH + (n+1) H(+)(in) = a plastoquinol + NAD(+) + n H(+)(out). The catalysed reaction is a plastoquinone + NADPH + (n+1) H(+)(in) = a plastoquinol + NADP(+) + n H(+)(out). Its function is as follows. NDH shuttles electrons from NAD(P)H:plastoquinone, via FMN and iron-sulfur (Fe-S) centers, to quinones in the photosynthetic chain and possibly in a chloroplast respiratory chain. The immediate electron acceptor for the enzyme in this species is believed to be plastoquinone. Couples the redox reaction to proton translocation, and thus conserves the redox energy in a proton gradient. This is NAD(P)H-quinone oxidoreductase subunit 5, chloroplastic (ndhF) from Pentatrichia integra (Rock-climbing daisy).